The following is a 455-amino-acid chain: Probable glycine dehydrogenase (decarboxylating) subunit 1 (455 aa).

It belongs to the GcvP family. N-terminal subunit subfamily. As to quaternary structure, the glycine cleavage system is composed of four proteins: P, T, L and H. In this organism, the P 'protein' is a heterodimer of two subunits.

The catalysed reaction is N(6)-[(R)-lipoyl]-L-lysyl-[glycine-cleavage complex H protein] + glycine + H(+) = N(6)-[(R)-S(8)-aminomethyldihydrolipoyl]-L-lysyl-[glycine-cleavage complex H protein] + CO2. In terms of biological role, the glycine cleavage system catalyzes the degradation of glycine. The P protein binds the alpha-amino group of glycine through its pyridoxal phosphate cofactor; CO(2) is released and the remaining methylamine moiety is then transferred to the lipoamide cofactor of the H protein. In Saccharolobus islandicus (strain Y.G.57.14 / Yellowstone #1) (Sulfolobus islandicus), this protein is Probable glycine dehydrogenase (decarboxylating) subunit 1.